We begin with the raw amino-acid sequence, 124 residues long: Small ribosomal subunit protein uS12 (124 aa).

A 3-methylthioaspartic acid modification is found at Asp-89.

This sequence belongs to the universal ribosomal protein uS12 family. As to quaternary structure, part of the 30S ribosomal subunit. Contacts proteins S8 and S17. May interact with IF1 in the 30S initiation complex.

With S4 and S5 plays an important role in translational accuracy. Its function is as follows. Interacts with and stabilizes bases of the 16S rRNA that are involved in tRNA selection in the A site and with the mRNA backbone. Located at the interface of the 30S and 50S subunits, it traverses the body of the 30S subunit contacting proteins on the other side and probably holding the rRNA structure together. The combined cluster of proteins S8, S12 and S17 appears to hold together the shoulder and platform of the 30S subunit. The chain is Small ribosomal subunit protein uS12 from Thermoanaerobacter pseudethanolicus (strain ATCC 33223 / 39E) (Clostridium thermohydrosulfuricum).